The following is a 520-amino-acid chain: Peptide chain release factor 3 (520 aa).

In terms of domain architecture, tr-type G spans 8-277 (ESRKTFAIIS…FAPMPNARQT (270 aa)). Residues 17-24 (SHPDAGKT), 85-89 (DTPGH), and 139-142 (NKLD) each bind GTP.

The protein belongs to the TRAFAC class translation factor GTPase superfamily. Classic translation factor GTPase family. PrfC subfamily.

It is found in the cytoplasm. Increases the formation of ribosomal termination complexes and stimulates activities of RF-1 and RF-2. It binds guanine nucleotides and has strong preference for UGA stop codons. It may interact directly with the ribosome. The stimulation of RF-1 and RF-2 is significantly reduced by GTP and GDP, but not by GMP. This Staphylococcus aureus (strain MRSA252) protein is Peptide chain release factor 3.